The primary structure comprises 275 residues: Homeobox-leucine zipper protein ATHB-17 (275 aa).

The tract at residues 95-143 (SSPLSDEGSGGGRDQLRLDMNRLPSSEDGDDEEFSHDDGSAPPRKKLRL) is disordered. The homeobox DNA-binding region spans 136–195 (PPRKKLRLTREQSRLLEDSFRQNHTLNPKQKEVLAKHLMLRPRQIEVWFQNRRARSKLKQ). Residues 203-224 (LKRWFGSLTEENHRLHREVEEL) are leucine-zipper. A disordered region spans residues 252 to 275 (AASPSRAVVPVPAKKTFPPQERDR).

This sequence belongs to the HD-ZIP homeobox family. Class II subfamily.

The protein localises to the nucleus. Probable transcription factor. In Arabidopsis thaliana (Mouse-ear cress), this protein is Homeobox-leucine zipper protein ATHB-17 (ATHB-17).